The following is a 449-amino-acid chain: Aspartate aminotransferase 3, chloroplastic (449 aa).

The N-terminal 43 residues, 1-43 (MKTTHFSSSSSSDRRIGALLRHLNSGSDSDNLSSLYASPTSGG), are a transit peptide targeting the chloroplast. G81, W178, and N231 together coordinate L-aspartate. K295 is modified (N6-(pyridoxal phosphate)lysine). R423 contacts L-aspartate.

The protein belongs to the class-I pyridoxal-phosphate-dependent aminotransferase family. Homodimer. It depends on pyridoxal 5'-phosphate as a cofactor. As to expression, expressed in roots, cauline leaves, flowers, hypocotyl epidermis and root hair cells.

It is found in the plastid. The protein localises to the chloroplast. It catalyses the reaction L-aspartate + 2-oxoglutarate = oxaloacetate + L-glutamate. Amino acid aminotransferase important for the metabolism of amino acids and Krebs-cycle related organic acids. No activity with D-Asp or D-Ala as amino donors. In plants, it is involved in nitrogen metabolism and in aspects of carbon and energy metabolism. This chain is Aspartate aminotransferase 3, chloroplastic (ASP3), found in Arabidopsis thaliana (Mouse-ear cress).